A 187-amino-acid polypeptide reads, in one-letter code: MSLINTKIKPFKNQAFKNGEFIEVTEKDTEGRWSVFFFYPADFTFVCPTELGDVADHYEELQKLGVDVYSVSTDTHFTHKAWHSSSETIAKIKYAMIGDPTGALTRNFDNMREDEGLADRATFVVDPQGIIQAIEVTAEGIGRDASDLLRKIKAAQYVAAHPGEVCPAKWKEGEATLAPSLDLVGKI.

Positions 2–157 (SLINTKIKPF…LLRKIKAAQY (156 aa)) constitute a Thioredoxin domain. Cys47 (cysteine sulfenic acid (-SOH) intermediate) is an active-site residue.

The protein belongs to the peroxiredoxin family. AhpC/Prx1 subfamily. Homodimer; disulfide-linked, upon oxidation. 5 homodimers assemble to form a ring-like decamer.

Its subcellular location is the cytoplasm. The catalysed reaction is a hydroperoxide + NADH + H(+) = an alcohol + NAD(+) + H2O. Its function is as follows. Thiol-specific peroxidase that catalyzes the reduction of hydrogen peroxide and organic hydroperoxides to water and alcohols, respectively. Plays a role in cell protection against oxidative stress by detoxifying peroxides. The sequence is that of Alkyl hydroperoxide reductase C (ahpC) from Salmonella typhi.